The following is a 186-amino-acid chain: Peptidyl-tRNA hydrolase (186 aa).

Position 14 (Tyr-14) interacts with tRNA. The Proton acceptor role is filled by His-19. 3 residues coordinate tRNA: Tyr-61, Asn-63, and Asn-107.

This sequence belongs to the PTH family. Monomer.

The protein localises to the cytoplasm. The catalysed reaction is an N-acyl-L-alpha-aminoacyl-tRNA + H2O = an N-acyl-L-amino acid + a tRNA + H(+). Hydrolyzes ribosome-free peptidyl-tRNAs (with 1 or more amino acids incorporated), which drop off the ribosome during protein synthesis, or as a result of ribosome stalling. Functionally, catalyzes the release of premature peptidyl moieties from peptidyl-tRNA molecules trapped in stalled 50S ribosomal subunits, and thus maintains levels of free tRNAs and 50S ribosomes. This is Peptidyl-tRNA hydrolase from Helicobacter pylori (strain Shi470).